A 948-amino-acid chain; its full sequence is Valine--tRNA ligase (948 aa).

Positions 40–50 (PNVTGSLHMGH) match the 'HIGH' region motif. The 'KMSKS' region motif lies at 551–555 (KMSKS). Position 554 (K554) interacts with ATP. The stretch at 879 to 947 (LIDKGAELAR…LAEQHARISS (69 aa)) forms a coiled coil.

Belongs to the class-I aminoacyl-tRNA synthetase family. ValS type 1 subfamily. As to quaternary structure, monomer.

Its subcellular location is the cytoplasm. The catalysed reaction is tRNA(Val) + L-valine + ATP = L-valyl-tRNA(Val) + AMP + diphosphate. Functionally, catalyzes the attachment of valine to tRNA(Val). As ValRS can inadvertently accommodate and process structurally similar amino acids such as threonine, to avoid such errors, it has a 'posttransfer' editing activity that hydrolyzes mischarged Thr-tRNA(Val) in a tRNA-dependent manner. This chain is Valine--tRNA ligase, found in Pseudomonas fluorescens (strain ATCC BAA-477 / NRRL B-23932 / Pf-5).